The following is a 380-amino-acid chain: Erythronate-4-phosphate dehydrogenase (380 aa).

Substrate is bound by residues Ser-45 and Thr-66. NAD(+) is bound by residues Asp-146, Thr-174, 205–207, and Asp-231; that span reads ASR. Arg-207 is an active-site residue. Residue Glu-236 is part of the active site. His-253 serves as the catalytic Proton donor. Gly-256 is a binding site for NAD(+). Residue Tyr-257 participates in substrate binding.

Belongs to the D-isomer specific 2-hydroxyacid dehydrogenase family. PdxB subfamily. Homodimer.

The protein localises to the cytoplasm. The enzyme catalyses 4-phospho-D-erythronate + NAD(+) = (R)-3-hydroxy-2-oxo-4-phosphooxybutanoate + NADH + H(+). It functions in the pathway cofactor biosynthesis; pyridoxine 5'-phosphate biosynthesis; pyridoxine 5'-phosphate from D-erythrose 4-phosphate: step 2/5. Catalyzes the oxidation of erythronate-4-phosphate to 3-hydroxy-2-oxo-4-phosphonooxybutanoate. The polypeptide is Erythronate-4-phosphate dehydrogenase (Pseudomonas putida (strain GB-1)).